A 540-amino-acid polypeptide reads, in one-letter code: Chaperonin GroEL (540 aa).

Residues 29–32, 86–90, Gly-413, 477–479, and Asp-493 contribute to the ATP site; these read TLGP, DGTTT, and DAL.

The protein belongs to the chaperonin (HSP60) family. In terms of assembly, forms a cylinder of 14 subunits composed of two heptameric rings stacked back-to-back. Interacts with the co-chaperonin GroES.

Its subcellular location is the cytoplasm. It carries out the reaction ATP + H2O + a folded polypeptide = ADP + phosphate + an unfolded polypeptide.. In terms of biological role, together with its co-chaperonin GroES, plays an essential role in assisting protein folding. The GroEL-GroES system forms a nano-cage that allows encapsulation of the non-native substrate proteins and provides a physical environment optimized to promote and accelerate protein folding. This Clostridium botulinum (strain Alaska E43 / Type E3) protein is Chaperonin GroEL.